The following is a 121-amino-acid chain: Small ribosomal subunit protein uS13 (121 aa).

Residues histidine 91 to lysine 121 form a disordered region. Basic residues predominate over residues glutamine 100–lysine 121.

This sequence belongs to the universal ribosomal protein uS13 family. In terms of assembly, part of the 30S ribosomal subunit. Forms a loose heterodimer with protein S19. Forms two bridges to the 50S subunit in the 70S ribosome.

Functionally, located at the top of the head of the 30S subunit, it contacts several helices of the 16S rRNA. In the 70S ribosome it contacts the 23S rRNA (bridge B1a) and protein L5 of the 50S subunit (bridge B1b), connecting the 2 subunits; these bridges are implicated in subunit movement. Contacts the tRNAs in the A and P-sites. This is Small ribosomal subunit protein uS13 from Prochlorococcus marinus (strain AS9601).